The chain runs to 221 residues: Large ribosomal subunit protein uL4 (221 aa).

The disordered stretch occupies residues 47–77 (GTASTKTRGEVSGGGRKPWIQKHTGRARQGS).

The protein belongs to the universal ribosomal protein uL4 family. As to quaternary structure, part of the 50S ribosomal subunit.

Functionally, one of the primary rRNA binding proteins, this protein initially binds near the 5'-end of the 23S rRNA. It is important during the early stages of 50S assembly. It makes multiple contacts with different domains of the 23S rRNA in the assembled 50S subunit and ribosome. Its function is as follows. Forms part of the polypeptide exit tunnel. The protein is Large ribosomal subunit protein uL4 of Thermosipho melanesiensis (strain DSM 12029 / CIP 104789 / BI429).